Here is a 271-residue protein sequence, read N- to C-terminus: Pyrroline-5-carboxylate reductase (271 aa).

The protein belongs to the pyrroline-5-carboxylate reductase family.

Its subcellular location is the cytoplasm. The catalysed reaction is L-proline + NADP(+) = (S)-1-pyrroline-5-carboxylate + NADPH + 2 H(+). It carries out the reaction L-proline + NAD(+) = (S)-1-pyrroline-5-carboxylate + NADH + 2 H(+). It functions in the pathway amino-acid biosynthesis; L-proline biosynthesis; L-proline from L-glutamate 5-semialdehyde: step 1/1. In terms of biological role, catalyzes the reduction of 1-pyrroline-5-carboxylate (PCA) to L-proline. This is Pyrroline-5-carboxylate reductase from Staphylococcus saprophyticus subsp. saprophyticus (strain ATCC 15305 / DSM 20229 / NCIMB 8711 / NCTC 7292 / S-41).